Consider the following 516-residue polypeptide: D-aminopeptidase (516 aa).

Catalysis depends on Ser-61, which acts as the Nucleophile. Lys-64 serves as the catalytic Proton donor/acceptor. The important for specificity stretch occupies residues Arg-476–Asp-486. Asp-480 is a binding site for substrate.

This sequence belongs to the peptidase S12 family. As to quaternary structure, homodimer.

The catalysed reaction is Release of an N-terminal D-amino acid from a peptide, Xaa-|-Yaa-, in which Xaa is preferably D-Ala, D-Ser or D-Thr. D-amino acid amides and methyl esters also are hydrolyzed, as is glycine amide.. Its activity is regulated as follows. Inhibited by beta-lactam compounds such as 6-aminopenicillic acid, 7-aminocephalosporanic acid, benzylpenicillin and ampicillin. Inhibited by p-chloromercuribenzoate. Functionally, hydrolyzes N-terminal residues in D-amino acid-containing peptides. This chain is D-aminopeptidase, found in Cereibacter sphaeroides (strain ATCC 17029 / ATH 2.4.9) (Rhodobacter sphaeroides).